A 684-amino-acid polypeptide reads, in one-letter code: MKNLPGVFAFPDNETIFAHAYSQRELEAMLPARAGAQPHAFAYAAWPLSKHRWRGAFVCRQRGVLKLNLELDAGAFERVPRSEAERFEPEQSDARALMHRGADGTVMSFECYSFLRCRPGLELREAGLALLRGLVVGGNRMRIFSGVRRAGASAATSAGMLGNESPFERAPFASLRIDAQAALFRAWAARRPTVVTGGTGVGKTSQVPKLLLWFNYLFGGTEDLDVLAPARERPVVLSLPRVALVRMNGHALRRALGFDALEGSPVELRYGDLAPADANSSRSPFRLVVSTNQLTLGALFAHGTVILDEVHEHDQMADIMLAVLRVHRARVDSIVLMSATLEDDRERLQEFFPDAEFVHIPGSTRFEIRGVYVRNSSDPRDARAYDEEERRNVSAALSAHRPRAGRCGILFVASVAQCEDYARLLTREHPELGVYVVHGKTPNVDALLAEVYASARPCVLVSTPYLESSVTIRTVTHVYDTGRVFVPAPFGGRQMLISPAMRTQRRGRVGRVMPGTYVYFYDPARLAPIKRIDSEFLYNYIIYARHYGLVLPDDLYVQPSDLELLRRCEEYLDGFGLAPERLFELASTRYLRMVEYAKIYARGGARAEELNRFERDGVVTEDVLASIRALNLRARVLSARARRGQFLHTCEVAFGPYAGTRFLLANRRRLRGDIFMVTERSFVL.

In terms of domain architecture, Helicase ATP-binding spans 184–359 (FRAWAARRPT…EFFPDAEFVH (176 aa)). Residue 197–204 (GGTGVGKT) coordinates ATP. Positions 308–311 (DEVH) match the DEXH box motif. A Helicase C-terminal domain is found at 392 to 563 (NVSAALSAHR…DLYVQPSDLE (172 aa)).

This sequence belongs to the DEAD box helicase family. DEAH subfamily. As to quaternary structure, monomer.

The protein resides in the virion. The catalysed reaction is ATP + H2O = ADP + phosphate + H(+). Functionally, NTP-dependent helicase that catalyzes unidirectional unwinding of 3'tailed duplex RNAs and plays an important role during transcription of early mRNAs, presumably by preventing R-loop formation behind the elongating RNA polymerase. Might also play a role in the export of newly synthesized mRNA chains out of the core into the cytoplasm. Required for replication and propagation of viral particles. The protein is RNA helicase NPH-II (NPH2) of Homo sapiens (Human).